Consider the following 119-residue polypeptide: Small ribosomal subunit protein uS13 (119 aa).

The segment at 94-119 (GLPVRGQRTQTNARTRKGPRRGPAGK) is disordered.

The protein belongs to the universal ribosomal protein uS13 family. In terms of assembly, part of the 30S ribosomal subunit. Forms a loose heterodimer with protein S19. Forms two bridges to the 50S subunit in the 70S ribosome.

In terms of biological role, located at the top of the head of the 30S subunit, it contacts several helices of the 16S rRNA. In the 70S ribosome it contacts the 23S rRNA (bridge B1a) and protein L5 of the 50S subunit (bridge B1b), connecting the 2 subunits; these bridges are implicated in subunit movement. Contacts the tRNAs in the A and P-sites. The sequence is that of Small ribosomal subunit protein uS13 from Alkalilimnicola ehrlichii (strain ATCC BAA-1101 / DSM 17681 / MLHE-1).